Reading from the N-terminus, the 213-residue chain is UPF0301 protein RPC_0788 (213 aa).

The segment at 1–20 is disordered; that stretch reads MDPKSKAPKRDETKGADDAS.

The protein belongs to the UPF0301 (AlgH) family.

The polypeptide is UPF0301 protein RPC_0788 (Rhodopseudomonas palustris (strain BisB18)).